A 432-amino-acid polypeptide reads, in one-letter code: Adenylosuccinate synthetase (432 aa).

GTP contacts are provided by residues 13–19 (GDEGKGK) and 41–43 (GHT). The active-site Proton acceptor is Asp-14. 2 residues coordinate Mg(2+): Asp-14 and Gly-41. IMP contacts are provided by residues 14 to 17 (DEGK), 39 to 42 (NAGH), Thr-130, Arg-144, Gln-225, Thr-240, and Arg-304. The active-site Proton donor is the His-42. 300–306 (ATTGRRR) contributes to the substrate binding site. Residues Arg-306, 332–334 (KLD), and 414–416 (STG) contribute to the GTP site.

This sequence belongs to the adenylosuccinate synthetase family. As to quaternary structure, homodimer. Requires Mg(2+) as cofactor.

It is found in the cytoplasm. It carries out the reaction IMP + L-aspartate + GTP = N(6)-(1,2-dicarboxyethyl)-AMP + GDP + phosphate + 2 H(+). The protein operates within purine metabolism; AMP biosynthesis via de novo pathway; AMP from IMP: step 1/2. Plays an important role in the de novo pathway of purine nucleotide biosynthesis. Catalyzes the first committed step in the biosynthesis of AMP from IMP. The chain is Adenylosuccinate synthetase from Methylococcus capsulatus (strain ATCC 33009 / NCIMB 11132 / Bath).